The following is a 296-amino-acid chain: Formamidopyrimidine-DNA glycosylase (296 aa).

Proline 2 serves as the catalytic Schiff-base intermediate with DNA. Catalysis depends on glutamate 3, which acts as the Proton donor. Residue lysine 61 is the Proton donor; for beta-elimination activity of the active site. The DNA site is built by histidine 104, arginine 128, and lysine 174. Residues 260 to 294 (HAYGQQGQACDRCGSNIIREKFANRSSHFCPRCQL) form an FPG-type zinc finger. Residue arginine 284 is the Proton donor; for delta-elimination activity of the active site.

It belongs to the FPG family. In terms of assembly, monomer. The cofactor is Zn(2+).

It carries out the reaction Hydrolysis of DNA containing ring-opened 7-methylguanine residues, releasing 2,6-diamino-4-hydroxy-5-(N-methyl)formamidopyrimidine.. It catalyses the reaction 2'-deoxyribonucleotide-(2'-deoxyribose 5'-phosphate)-2'-deoxyribonucleotide-DNA = a 3'-end 2'-deoxyribonucleotide-(2,3-dehydro-2,3-deoxyribose 5'-phosphate)-DNA + a 5'-end 5'-phospho-2'-deoxyribonucleoside-DNA + H(+). Its function is as follows. Involved in base excision repair of DNA damaged by oxidation or by mutagenic agents. Acts as a DNA glycosylase that recognizes and removes damaged bases. Has a preference for oxidized purines, such as 7,8-dihydro-8-oxoguanine (8-oxoG). Has AP (apurinic/apyrimidinic) lyase activity and introduces nicks in the DNA strand. Cleaves the DNA backbone by beta-delta elimination to generate a single-strand break at the site of the removed base with both 3'- and 5'-phosphates. The chain is Formamidopyrimidine-DNA glycosylase from Corynebacterium diphtheriae (strain ATCC 700971 / NCTC 13129 / Biotype gravis).